The chain runs to 209 residues: Ribosomal RNA large subunit methyltransferase E (209 aa).

The S-adenosyl-L-methionine site is built by Gly-63, Trp-65, Asp-83, Asp-99, and Asp-124. Lys-164 functions as the Proton acceptor in the catalytic mechanism.

It belongs to the class I-like SAM-binding methyltransferase superfamily. RNA methyltransferase RlmE family.

Its subcellular location is the cytoplasm. The enzyme catalyses uridine(2552) in 23S rRNA + S-adenosyl-L-methionine = 2'-O-methyluridine(2552) in 23S rRNA + S-adenosyl-L-homocysteine + H(+). In terms of biological role, specifically methylates the uridine in position 2552 of 23S rRNA at the 2'-O position of the ribose in the fully assembled 50S ribosomal subunit. This is Ribosomal RNA large subunit methyltransferase E from Photorhabdus laumondii subsp. laumondii (strain DSM 15139 / CIP 105565 / TT01) (Photorhabdus luminescens subsp. laumondii).